Consider the following 474-residue polypeptide: Transcription termination factor Rho (474 aa).

Positions 1-60 (MTEELDNTPSPAGDIPQETLPKPLPAPEETAGEQPAAAPEENRGNAVREEEEAAPVLEQI) are disordered. One can recognise a Rho RNA-BD domain in the interval 107 to 182 (EVVVSGVMEQ…ASVISVEDIP (76 aa)). Residues 226–231 (GKGQRG), 238–243 (RGGKTV), and R269 contribute to the ATP site.

The protein belongs to the Rho family. In terms of assembly, homohexamer. The homohexamer assembles into an open ring structure.

Its function is as follows. Facilitates transcription termination by a mechanism that involves Rho binding to the nascent RNA, activation of Rho's RNA-dependent ATPase activity, and release of the mRNA from the DNA template. This is Transcription termination factor Rho from Akkermansia muciniphila (strain ATCC BAA-835 / DSM 22959 / JCM 33894 / BCRC 81048 / CCUG 64013 / CIP 107961 / Muc).